We begin with the raw amino-acid sequence, 92 residues long: MPAYVFSKESFLKFLEGHLEDDVVVVVSSDVTDFCKKLSESMVGEKEYCFAEFAFPADIFDADEDEIDEMMKYAIVFVEKEKLSEAGRNAIR.

This is an uncharacterized protein from Archaeoglobus fulgidus (strain ATCC 49558 / DSM 4304 / JCM 9628 / NBRC 100126 / VC-16).